Reading from the N-terminus, the 448-residue chain is Trigger factor (448 aa).

In terms of domain architecture, PPIase FKBP-type spans 173–258 (SDRVTIDFVG…LKQIEWAHMP (86 aa)).

The protein belongs to the FKBP-type PPIase family. Tig subfamily.

The protein resides in the cytoplasm. It catalyses the reaction [protein]-peptidylproline (omega=180) = [protein]-peptidylproline (omega=0). In terms of biological role, involved in protein export. Acts as a chaperone by maintaining the newly synthesized protein in an open conformation. Functions as a peptidyl-prolyl cis-trans isomerase. This Herminiimonas arsenicoxydans protein is Trigger factor.